Here is a 470-residue protein sequence, read N- to C-terminus: MKVKTRFAPSPTGFLHVGGARTALYSWLHAKSKGGEFVLRIEDTDIARSTQEAVDAILEGMTWMGLTWDEGPYYQTKRFDRYKEIIAKMLSDGTAYKCYCTKERVNELREAQEKAGESPRYDSKCRGLAPQNTDAPYVIRFKNPKEGSVKFDDHVRGPIEFSNTELDDLIIQRTDGTPTYNFCVVVDDWDMGITYVVRGEDHINNTPRQINILKALGAPLPEYAHVAMILGDDGAKLSKRHGAVSVMQFRDEGYLPEALKNYLVRLGWSHGDQEIFSEKEMIELFSLDAINKAPSAFNTEKLLWLNQHYIKSLDPAYIAQHLAWHMTNQKIDMTNGPALPEIVSALSERAKTLVELATTSRYFFEEYEDFDATAAKKHLRPVAEDALVLVKQKLQTSDDWTDPALHQIINDTANELGVGMGKVGMPLRVAITGGGQSPSLDVTLRLIGKERSIKRIDRALEFIAARVAAS.

Positions 9–19 match the 'HIGH' region motif; that stretch reads PSPTGFLHVGG. The 'KMSKS' region motif lies at 236 to 240; sequence KLSKR. Lys-239 is a binding site for ATP.

It belongs to the class-I aminoacyl-tRNA synthetase family. Glutamate--tRNA ligase type 1 subfamily. In terms of assembly, monomer.

It is found in the cytoplasm. The enzyme catalyses tRNA(Glu) + L-glutamate + ATP = L-glutamyl-tRNA(Glu) + AMP + diphosphate. Its function is as follows. Catalyzes the attachment of glutamate to tRNA(Glu) in a two-step reaction: glutamate is first activated by ATP to form Glu-AMP and then transferred to the acceptor end of tRNA(Glu). The polypeptide is Glutamate--tRNA ligase (Psychromonas ingrahamii (strain DSM 17664 / CCUG 51855 / 37)).